We begin with the raw amino-acid sequence, 388 residues long: L-cysteine desulfidase (388 aa).

Cys-25 serves as the catalytic Proton acceptor. [4Fe-4S] cluster is bound by residues Cys-282, Cys-322, and Cys-329.

Belongs to the L-cysteine desulfidase family. In terms of assembly, homotrimer. The cofactor is [4Fe-4S] cluster.

It carries out the reaction L-cysteine + H2O = hydrogen sulfide + pyruvate + NH4(+) + H(+). Functionally, catalyzes the cleavage of L-cysteine to form 2-aminoprop-2-enoate and sulfide. The former then spontaneously hydrolyzes to pyruvate and NH(3). May be responsible for the production of sulfide required for the biosynthesis of iron-sulfur centers in this archaea. Is very specific for L-cysteine, with no activity being detected with D-cysteine, L-homocysteine, 3-mercaptopropionate (cysteine without the amino group), cysteamine (cysteine without the carboxylate), or mercaptolactate (the hydroxyl analog of cysteine). This Methanocaldococcus jannaschii (strain ATCC 43067 / DSM 2661 / JAL-1 / JCM 10045 / NBRC 100440) (Methanococcus jannaschii) protein is L-cysteine desulfidase.